Here is a 1225-residue protein sequence, read N- to C-terminus: DNA-directed RNA polymerase subunit beta' (1225 aa).

Positions 60, 62, 75, and 78 each coordinate Zn(2+). The Mg(2+) site is built by D450, D452, and D454. Residues C818, C892, C899, and C902 each coordinate Zn(2+).

This sequence belongs to the RNA polymerase beta' chain family. The RNAP catalytic core consists of 2 alpha, 1 beta, 1 beta' and 1 omega subunit. When a sigma factor is associated with the core the holoenzyme is formed, which can initiate transcription. Requires Mg(2+) as cofactor. The cofactor is Zn(2+).

It catalyses the reaction RNA(n) + a ribonucleoside 5'-triphosphate = RNA(n+1) + diphosphate. Functionally, DNA-dependent RNA polymerase catalyzes the transcription of DNA into RNA using the four ribonucleoside triphosphates as substrates. The chain is DNA-directed RNA polymerase subunit beta' from Streptococcus pneumoniae (strain ATCC BAA-255 / R6).